We begin with the raw amino-acid sequence, 213 residues long: MIIAIDGPAASGKGTLARRLATQLRFAYLDTGKLYRAVGMAVIKGGADPHDAKAALAAARALDPATLGDRLLSTDTAGKAASVVGAIPEVRAALLDLQRDFATHPPQGAPGAVLDGRDIGTVVCPEAEVKIFVTASVEVRAHRRLQELRSGGHDVKEDDVLRDMRERDARDSGRAVAPMAIAADAVVLDTSRMTAEQALTAALDILAHKSQKT.

7-15 (GPAASGKGT) lines the ATP pocket.

It belongs to the cytidylate kinase family. Type 1 subfamily.

Its subcellular location is the cytoplasm. The catalysed reaction is CMP + ATP = CDP + ADP. It carries out the reaction dCMP + ATP = dCDP + ADP. This Rhodospirillum rubrum (strain ATCC 11170 / ATH 1.1.1 / DSM 467 / LMG 4362 / NCIMB 8255 / S1) protein is Cytidylate kinase.